We begin with the raw amino-acid sequence, 188 residues long: dCTP deaminase (188 aa).

DCTP contacts are provided by residues 111–116, 135–137, Gln-156, Tyr-170, and Gln-180; these read KSTYAR and TLE. Residue Glu-137 is the Proton donor/acceptor of the active site.

Belongs to the dCTP deaminase family. In terms of assembly, homotrimer.

It catalyses the reaction dCTP + H2O + H(+) = dUTP + NH4(+). It participates in pyrimidine metabolism; dUMP biosynthesis; dUMP from dCTP (dUTP route): step 1/2. Functionally, catalyzes the deamination of dCTP to dUTP. This is dCTP deaminase from Marinobacter nauticus (strain ATCC 700491 / DSM 11845 / VT8) (Marinobacter aquaeolei).